We begin with the raw amino-acid sequence, 416 residues long: MNILDELAWRGAINQVSDEEGLRKLLDKKSVGLYCGVDPTGDSLHIGHLIPFMMLKRFQEAGHRAHIIIGGGTGSIGDPSGKKSERVLQTMEQVHHNEEALTKQMKHLFGKDNITIVNNRDWLSKIDLLGFLRDYGKLFNVNTMLNKEVVASRLEVGISFTEFTYQILQSIDFHHLWKNNDVQLQIGGADQWGNITSGIDLIHKMEGSEAEAYALTIPLMLKADGTKFGKTAGGAVWLDPEKTTPYEFYQFWLNQDDRDVIKYLKYFTFLSQEEIADLEEKVKTQPEKREAQRRLAEETVEFVHGKEAVKEAEHISAALFSGEVKDLTASEIEQGFKNMPSVEVTAEPKNIVEWLVDTGIESSKRQAREDVTNGAIRINGDRIQDLEFTIDPSAEFDGKFVIVRRGKKKYFLARVK.

Y34 lines the L-tyrosine pocket. Positions 39–48 (PTGDSLHIGH) match the 'HIGH' region motif. The L-tyrosine site is built by Y165 and Q169. The short motif at 227–231 (KFGKT) is the 'KMSKS' region element. K230 contacts ATP. The S4 RNA-binding domain occupies 349–416 (KNIVEWLVDT…KKKYFLARVK (68 aa)).

This sequence belongs to the class-I aminoacyl-tRNA synthetase family. TyrS type 1 subfamily. Homodimer.

The protein localises to the cytoplasm. The catalysed reaction is tRNA(Tyr) + L-tyrosine + ATP = L-tyrosyl-tRNA(Tyr) + AMP + diphosphate + H(+). Functionally, catalyzes the attachment of tyrosine to tRNA(Tyr) in a two-step reaction: tyrosine is first activated by ATP to form Tyr-AMP and then transferred to the acceptor end of tRNA(Tyr). The sequence is that of Tyrosine--tRNA ligase from Ligilactobacillus salivarius (strain UCC118) (Lactobacillus salivarius).